The primary structure comprises 601 residues: HIRA-interacting protein 3 (601 aa).

Disordered stretches follow at residues 60 to 469 and 546 to 601; these read KMQA…EDHP and STGR…GDSS. A compositionally biased stretch (basic and acidic residues) spans 66-76; that stretch reads GTREGKPDFIK. 3 positions are modified to phosphoserine: S85, S96, and S98. Over residues 97-113 the composition is skewed to low complexity; that stretch reads ESESSSSPSSPDGSGPS. The segment covering 117–129 has biased composition (basic residues); sequence RTTKKTCLRRALK. A compositionally biased stretch (basic and acidic residues) spans 130–149; it reads KAVESTDEDHQTDLDAKMGL. At S134 the chain carries Phosphoserine. A phosphothreonine mark is found at T135 and T141. A phosphoserine mark is found at S152, S153, and S163. T167 bears the Phosphothreonine mark. Over residues 186 to 205 the composition is skewed to basic and acidic residues; it reads GAKDKQVPLKADRKQVREES. A phosphoserine mark is found at S205, S207, S208, S231, S234, S238, S313, S359, S360, S384, and S389. 2 stretches are compositionally biased toward basic and acidic residues: residues 238-264 and 313-324; these read SPAK…ERKS and SSEKGEAEKEEG. Positions 347 to 378 are enriched in polar residues; sequence RTQTESGRRQNTSSRDDSNSTQEQAAAQGTTK. A compositionally biased stretch (low complexity) spans 379 to 388; that stretch reads SGSLGSSNGD. The residue at position 391 (T391) is a Phosphothreonine. 2 positions are modified to phosphoserine: S396 and S398. Residues 413–432 are compositionally biased toward low complexity; sequence SNKSSKNGQARSCSSSSDSS. Residues 429 to 572 form an interaction with the histone H2A-H2B complex region; it reads SDSSPEPTGQ…TSPGETYRRT (144 aa). The segment covering 556-566 has biased composition (polar residues); sequence WNPSGEGTSPG. Phosphoserine is present on residues S564, S575, S595, S596, and S600. Residues 568-580 show a composition bias toward basic and acidic residues; the sequence is TYRRTLDSEEEQP.

Interacts (via C-terminus) with histone H2A-H2B dimers; the interaction is direct. Interacts with HIRA. Interacts with CK2. In terms of processing, phosphorylated by CK2.

It is found in the nucleus. Functionally, histone chaperone that carries a H2A-H2B histone complex and facilitates its deposition onto chromatin. In Mus musculus (Mouse), this protein is HIRA-interacting protein 3.